We begin with the raw amino-acid sequence, 201 residues long: Ephrin-A4 (201 aa).

The N-terminal stretch at 1 to 25 (MRLLPLLRTVLWAAFLGSPLRGGSS) is a signal peptide. An Ephrin RBD domain is found at 26 to 155 (LRHVVYWNSS…RLQVSVCCKE (130 aa)). N-linked (GlcNAc...) asparagine glycosylation is present at N33. Cystine bridges form between C58–C99 and C86–C144. S170 carries the GPI-anchor amidated serine lipid modification. The propeptide at 171-201 (GTSGWRGGDTPSPLCLLLLLLLLILRLLRIL) is removed in mature form.

Belongs to the ephrin family. As to expression, expressed in the adult spleen, lymph node, prostate, ovary, small intestine, and colon, and in fetal heart, lung, liver and kidney. Also detected in hematopoietic cell lines.

The protein localises to the cell membrane. It is found in the secreted. In terms of biological role, cell surface GPI-bound ligand for Eph receptors, a family of receptor tyrosine kinases which are crucial for migration, repulsion and adhesion during neuronal, vascular and epithelial development. Binds promiscuously Eph receptors residing on adjacent cells, leading to contact-dependent bidirectional signaling into neighboring cells. May play a role in the interaction between activated B-lymphocytes and dendritic cells in tonsils. In Homo sapiens (Human), this protein is Ephrin-A4 (EFNA4).